A 254-amino-acid polypeptide reads, in one-letter code: MTKLEICCYSVDCAQIAEKAGADRIELCCGQSEGGLTPSIGALMQARETVTIPVHPIVRPRGGDFCYSDNDFAIIKNDIARIRDMGFAGVVVGVLDIDGHIDMRRMREIMSVSGSLAVTFHRAFDMCQNPMIALQQLADLNVARILTSGQQQNAELGLALLKDLVAATQGQGPIIMAGAGVRLTNMQKFIDAGIRELHSSAGRTVPSTMKYRKAGVTMCADSDVDEFAHYCVDGEVVEAMKSLLVMGAPLPQSA.

Belongs to the CutC family.

It localises to the cytoplasm. This is PF03932 family protein CutC from Yersinia enterocolitica serotype O:8 / biotype 1B (strain NCTC 13174 / 8081).